The following is an 86-amino-acid chain: Small ribosomal subunit protein bS16 (86 aa).

Belongs to the bacterial ribosomal protein bS16 family.

This chain is Small ribosomal subunit protein bS16, found in Legionella pneumophila (strain Paris).